Consider the following 315-residue polypeptide: PIH1 domain-containing protein 2 (315 aa).

It belongs to the PIH1 family.

The sequence is that of PIH1 domain-containing protein 2 (PIH1D2) from Homo sapiens (Human).